Consider the following 667-residue polypeptide: Probable potassium transport system protein Kup (667 aa).

Helical transmembrane passes span 16–36, 58–78, 101–121, 146–166, 167–187, 221–241, 253–273, 294–314, 343–363, 373–393, 399–419, and 431–451; these read GFII…LYTM, VSLI…LIAL, WLII…ALTP, TNVI…QRFG, TGVI…VLGI, IFIL…YSDL, WPFV…WILA, VYLV…LISG, LYIP…VLYF, YGLA…YYLI, PLLA…FFLA, and VVVL…GTVI.

It belongs to the HAK/KUP transporter (TC 2.A.72) family.

Its subcellular location is the cell membrane. It carries out the reaction K(+)(in) + H(+)(in) = K(+)(out) + H(+)(out). In terms of biological role, transport of potassium into the cell. Likely operates as a K(+):H(+) symporter. This is Probable potassium transport system protein Kup from Streptococcus equi subsp. zooepidemicus (strain MGCS10565).